A 185-amino-acid polypeptide reads, in one-letter code: Elongation factor P (185 aa).

It belongs to the elongation factor P family.

Its subcellular location is the cytoplasm. It participates in protein biosynthesis; polypeptide chain elongation. Functionally, involved in peptide bond synthesis. Stimulates efficient translation and peptide-bond synthesis on native or reconstituted 70S ribosomes in vitro. Probably functions indirectly by altering the affinity of the ribosome for aminoacyl-tRNA, thus increasing their reactivity as acceptors for peptidyl transferase. The sequence is that of Elongation factor P from Oceanobacillus iheyensis (strain DSM 14371 / CIP 107618 / JCM 11309 / KCTC 3954 / HTE831).